Reading from the N-terminus, the 641-residue chain is Phosphomethylpyrimidine synthase (641 aa).

Residues Asn-221, Met-250, Tyr-279, His-315, 335–337 (SRG), 376–379 (DGLR), and Glu-415 each bind substrate. His-419 is a binding site for Zn(2+). Tyr-442 contributes to the substrate binding site. Position 483 (His-483) interacts with Zn(2+). Positions 563, 566, and 571 each coordinate [4Fe-4S] cluster.

Belongs to the ThiC family. In terms of assembly, homodimer. [4Fe-4S] cluster serves as cofactor.

The enzyme catalyses 5-amino-1-(5-phospho-beta-D-ribosyl)imidazole + S-adenosyl-L-methionine = 4-amino-2-methyl-5-(phosphooxymethyl)pyrimidine + CO + 5'-deoxyadenosine + formate + L-methionine + 3 H(+). It functions in the pathway cofactor biosynthesis; thiamine diphosphate biosynthesis. Catalyzes the synthesis of the hydroxymethylpyrimidine phosphate (HMP-P) moiety of thiamine from aminoimidazole ribotide (AIR) in a radical S-adenosyl-L-methionine (SAM)-dependent reaction. The sequence is that of Phosphomethylpyrimidine synthase from Rhodopseudomonas palustris (strain TIE-1).